The chain runs to 704 residues: DNA ligase (704 aa).

NAD(+) is bound by residues 58–62, 107–108, and E138; these read DYEYD and SL. Catalysis depends on K140, which acts as the N6-AMP-lysine intermediate. NAD(+) contacts are provided by R161, E199, K323, and K347. Zn(2+)-binding residues include C441, C444, C459, and C464. The BRCT domain maps to 621-704; sequence EKKGKLAGLN…LKLIGGENTE (84 aa).

The protein belongs to the NAD-dependent DNA ligase family. LigA subfamily. Mg(2+) is required as a cofactor. It depends on Mn(2+) as a cofactor.

The enzyme catalyses NAD(+) + (deoxyribonucleotide)n-3'-hydroxyl + 5'-phospho-(deoxyribonucleotide)m = (deoxyribonucleotide)n+m + AMP + beta-nicotinamide D-nucleotide.. Its function is as follows. DNA ligase that catalyzes the formation of phosphodiester linkages between 5'-phosphoryl and 3'-hydroxyl groups in double-stranded DNA using NAD as a coenzyme and as the energy source for the reaction. It is essential for DNA replication and repair of damaged DNA. The protein is DNA ligase of Sulfurihydrogenibium sp. (strain YO3AOP1).